The sequence spans 957 residues: Glycine dehydrogenase (decarboxylating) (957 aa).

Lys708 carries the post-translational modification N6-(pyridoxal phosphate)lysine.

It belongs to the GcvP family. The glycine cleavage system is composed of four proteins: P, T, L and H. The cofactor is pyridoxal 5'-phosphate.

It catalyses the reaction N(6)-[(R)-lipoyl]-L-lysyl-[glycine-cleavage complex H protein] + glycine + H(+) = N(6)-[(R)-S(8)-aminomethyldihydrolipoyl]-L-lysyl-[glycine-cleavage complex H protein] + CO2. In terms of biological role, the glycine cleavage system catalyzes the degradation of glycine. The P protein binds the alpha-amino group of glycine through its pyridoxal phosphate cofactor; CO(2) is released and the remaining methylamine moiety is then transferred to the lipoamide cofactor of the H protein. This Shigella sonnei (strain Ss046) protein is Glycine dehydrogenase (decarboxylating).